The chain runs to 346 residues: Phosphoribosylformylglycinamidine cyclo-ligase (346 aa).

This sequence belongs to the AIR synthase family.

The protein resides in the cytoplasm. The enzyme catalyses 2-formamido-N(1)-(5-O-phospho-beta-D-ribosyl)acetamidine + ATP = 5-amino-1-(5-phospho-beta-D-ribosyl)imidazole + ADP + phosphate + H(+). It participates in purine metabolism; IMP biosynthesis via de novo pathway; 5-amino-1-(5-phospho-D-ribosyl)imidazole from N(2)-formyl-N(1)-(5-phospho-D-ribosyl)glycinamide: step 2/2. The protein is Phosphoribosylformylglycinamidine cyclo-ligase of Methylobacillus flagellatus (strain ATCC 51484 / DSM 6875 / VKM B-1610 / KT).